Here is a 207-residue protein sequence, read N- to C-terminus: Large ribosomal subunit protein uL4 (207 aa).

Residues 56–76 (EVRGGGRKPWRQKGTGRARAG) form a disordered region. A compositionally biased stretch (basic residues) spans 60–71 (GGRKPWRQKGTG).

The protein belongs to the universal ribosomal protein uL4 family. As to quaternary structure, part of the 50S ribosomal subunit.

In terms of biological role, one of the primary rRNA binding proteins, this protein initially binds near the 5'-end of the 23S rRNA. It is important during the early stages of 50S assembly. It makes multiple contacts with different domains of the 23S rRNA in the assembled 50S subunit and ribosome. Its function is as follows. Forms part of the polypeptide exit tunnel. The chain is Large ribosomal subunit protein uL4 from Desulfitobacterium hafniense (strain DSM 10664 / DCB-2).